A 246-amino-acid chain; its full sequence is Proteasome subunit alpha type-6 (246 aa).

The protein belongs to the peptidase T1A family. The 26S proteasome consists of a 20S proteasome core and two 19S regulatory subunits. The 20S proteasome core is composed of 28 subunits that are arranged in four stacked rings, resulting in a barrel-shaped structure. The two end rings are each formed by seven alpha subunits, and the two central rings are each formed by seven beta subunits. The catalytic chamber with the active sites is on the inside of the barrel.

It localises to the cytoplasm. The protein localises to the nucleus. In terms of biological role, the proteasome is a multicatalytic proteinase complex which is characterized by its ability to cleave peptides with Arg, Phe, Tyr, Leu, and Glu adjacent to the leaving group at neutral or slightly basic pH. The proteasome has an ATP-dependent proteolytic activity. The polypeptide is Proteasome subunit alpha type-6 (pas-1) (Caenorhabditis elegans).